The primary structure comprises 463 residues: Serine carboxypeptidase-like 32 (463 aa).

A signal peptide spans 1 to 22 (MMNISNVSIALYLCTLFAFVSS). Cystine bridges form between cysteine 86-cysteine 345, cysteine 249-cysteine 262, and cysteine 286-cysteine 313. Asparagine 137 carries N-linked (GlcNAc...) asparagine glycosylation. Residue serine 179 is part of the active site. N-linked (GlcNAc...) asparagine glycans are attached at residues asparagine 201 and asparagine 250. N-linked (GlcNAc...) asparagine glycans are attached at residues asparagine 341 and asparagine 354. Residues aspartate 384 and histidine 436 contribute to the active site.

It belongs to the peptidase S10 family. In terms of tissue distribution, expressed in flowers.

The protein resides in the secreted. Functionally, probable carboxypeptidase. In Arabidopsis thaliana (Mouse-ear cress), this protein is Serine carboxypeptidase-like 32 (SCPL32).